The chain runs to 50 residues: MAREIITLACTECKRRNYTTTKNKQKHPERLELRKYCKWCRKHTIHREVK.

The protein belongs to the bacterial ribosomal protein bL33 family.

This Aquifex aeolicus (strain VF5) protein is Large ribosomal subunit protein bL33 (rpmG).